The primary structure comprises 218 residues: Probable transaldolase (218 aa).

K87 serves as the catalytic Schiff-base intermediate with substrate.

This sequence belongs to the transaldolase family. Type 3B subfamily.

The protein resides in the cytoplasm. The enzyme catalyses D-sedoheptulose 7-phosphate + D-glyceraldehyde 3-phosphate = D-erythrose 4-phosphate + beta-D-fructose 6-phosphate. Its pathway is carbohydrate degradation; pentose phosphate pathway; D-glyceraldehyde 3-phosphate and beta-D-fructose 6-phosphate from D-ribose 5-phosphate and D-xylulose 5-phosphate (non-oxidative stage): step 2/3. Functionally, transaldolase is important for the balance of metabolites in the pentose-phosphate pathway. This Parabacteroides distasonis (strain ATCC 8503 / DSM 20701 / CIP 104284 / JCM 5825 / NCTC 11152) protein is Probable transaldolase.